Consider the following 472-residue polypeptide: Acyltransferase PapA3 (472 aa).

It belongs to the PapA acyltransferase family.

It catalyses the reaction a long-chain fatty acyl-CoA + alpha,alpha-trehalose = a 2-O-(long-chain fatty acyl)-alpha,alpha-trehalose + CoA. It carries out the reaction a mycolipenoyl-CoA + a 2-O-(long-chain fatty acyl)-alpha,alpha-trehalose = a 2-O-(long-chain fatty acyl)-3-O-mycolipenoyl-trehalose + CoA. The catalysed reaction is alpha,alpha-trehalose + hexadecanoyl-CoA = 2-O-hexadecanoyl-alpha,alpha-trehalose + CoA. The enzyme catalyses 2-O-hexadecanoyl-alpha,alpha-trehalose + hexadecanoyl-CoA = 2-O,3-O-dihexadecanoyl-alpha,alpha-trehalose + CoA. In terms of biological role, involved in the biosynthesis of polyacyltrehalose (PAT), a pentaacylated, trehalose-based glycolipid that could have a role in anchoring the bacterial capsule. Catalyzes the sequential transfer of two palmitoyl groups onto a single glucose residue of trehalose generating the diacylated product 2,3-diacyltrehalose (trehalose dipalmitate). The sequence is that of Acyltransferase PapA3 (papA3) from Mycobacterium tuberculosis (strain CDC 1551 / Oshkosh).